Reading from the N-terminus, the 214-residue chain is Probable transaldolase (214 aa).

Catalysis depends on lysine 83, which acts as the Schiff-base intermediate with substrate.

This sequence belongs to the transaldolase family. Type 3B subfamily.

The protein resides in the cytoplasm. The catalysed reaction is D-sedoheptulose 7-phosphate + D-glyceraldehyde 3-phosphate = D-erythrose 4-phosphate + beta-D-fructose 6-phosphate. It participates in carbohydrate degradation; pentose phosphate pathway; D-glyceraldehyde 3-phosphate and beta-D-fructose 6-phosphate from D-ribose 5-phosphate and D-xylulose 5-phosphate (non-oxidative stage): step 2/3. Functionally, transaldolase is important for the balance of metabolites in the pentose-phosphate pathway. This is Probable transaldolase from Maridesulfovibrio salexigens (strain ATCC 14822 / DSM 2638 / NCIMB 8403 / VKM B-1763) (Desulfovibrio salexigens).